Reading from the N-terminus, the 1036-residue chain is DNA-directed RNA polymerase subunit beta (1036 aa).

It belongs to the RNA polymerase beta chain family. In terms of assembly, in plastids the minimal PEP RNA polymerase catalytic core is composed of four subunits: alpha, beta, beta', and beta''. When a (nuclear-encoded) sigma factor is associated with the core the holoenzyme is formed, which can initiate transcription.

It is found in the plastid. The protein resides in the chloroplast. The catalysed reaction is RNA(n) + a ribonucleoside 5'-triphosphate = RNA(n+1) + diphosphate. DNA-dependent RNA polymerase catalyzes the transcription of DNA into RNA using the four ribonucleoside triphosphates as substrates. This Cyanidioschyzon merolae (strain NIES-3377 / 10D) (Unicellular red alga) protein is DNA-directed RNA polymerase subunit beta.